The sequence spans 387 residues: Lactosylceramide alpha-2,3-sialyltransferase (387 aa).

At 1-33 (MPNEFTSAKLRSDCSRTSLQWYTQTQHKMRRPS) the chain is on the cytoplasmic side. The chain crosses the membrane as a helical; Signal-anchor for type II membrane protein span at residues 34-54 (LLLKDILKCMLVVFGVWLLYI). Residues 55-387 (LKLNYTAEEC…VVQDLSGGIH (333 aa)) lie on the Extracellular side of the membrane. N-linked (GlcNAc...) asparagine glycans are attached at residues Asn58 and Asn208. The cysteines at positions 167 and 325 are disulfide-linked.

Belongs to the glycosyltransferase 29 family.

The protein resides in the golgi apparatus membrane. It catalyses the reaction a beta-D-Gal-(1-&gt;4)-beta-D-Glc-(1&lt;-&gt;1)-Cer(d18:1(4E)) + CMP-N-acetyl-beta-neuraminate = a ganglioside GM3 (d18:1(4E)) + CMP + H(+). It carries out the reaction ganglioside GA2 (d18:1(4E)/18:0) + CMP-N-acetyl-beta-neuraminate = ganglioside GM2 (d18:1(4E)/18:0) + CMP + H(+). The enzyme catalyses a beta-D-Gal-(1&lt;-&gt;1')-ceramide + CMP-N-acetyl-beta-neuraminate = N-acetyl-alpha-neuraminosyl-(2-&gt;3)-beta-D-galactosyl-(1&lt;-&gt;1')-ceramide + CMP + H(+). The catalysed reaction is ganglioside GA1 (d18:1(4E)/18:0) + CMP-N-acetyl-beta-neuraminate = ganglioside GM1 (d18:1(4E)/18:0) + CMP + H(+). Its function is as follows. Transfers the sialyl group (N-acetyl-alpha-neuraminyl or NeuAc) from CMP-NeuAc to the non-reducing terminal galactose (Gal) of glycosphingolipids forming gangliosides (important molecules involved in the regulation of multiple cellular processes, including cell proliferation and differentiation, apoptosis, embryogenesis, development, and oncogenesis). Mainly involved in the biosynthesis of ganglioside GM3 but can also use different glycolipids as substrate acceptors such as D-galactosylceramide (GalCer), asialo-GM2 (GA2) and asialo-GM1 (GA1), although less preferentially than beta-D-Gal-(1-&gt;4)-beta-D-Glc-(1&lt;-&gt;1)-Cer (LacCer). The protein is Lactosylceramide alpha-2,3-sialyltransferase (St3gal5) of Rattus norvegicus (Rat).